The chain runs to 864 residues: DNA mismatch repair protein MutS (864 aa).

613–620 (GPNMGGKS) contributes to the ATP binding site.

The protein belongs to the DNA mismatch repair MutS family.

This protein is involved in the repair of mismatches in DNA. It is possible that it carries out the mismatch recognition step. This protein has a weak ATPase activity. The polypeptide is DNA mismatch repair protein MutS (Actinobacillus pleuropneumoniae serotype 3 (strain JL03)).